We begin with the raw amino-acid sequence, 92 residues long: Small ribosomal subunit protein uS19 (92 aa).

The protein belongs to the universal ribosomal protein uS19 family.

Its function is as follows. Protein S19 forms a complex with S13 that binds strongly to the 16S ribosomal RNA. This chain is Small ribosomal subunit protein uS19, found in Bartonella bacilliformis (strain ATCC 35685 / KC583 / Herrer 020/F12,63).